Consider the following 87-residue polypeptide: Glutaredoxin (87 aa).

The Glutaredoxin domain occupies 1-87 (MFVVIFGRPG…LMKEQFGIVA (87 aa)). Cys-11 and Cys-14 are oxidised to a cystine.

Belongs to the glutaredoxin family. In terms of assembly, monomer.

It localises to the cytoplasm. In terms of biological role, has a glutathione-disulfide oxidoreductase activity in the presence of NADPH and glutathione reductase. Reduces low molecular weight disulfides and proteins. This Haemophilus influenzae (strain ATCC 51907 / DSM 11121 / KW20 / Rd) protein is Glutaredoxin (grxA).